The following is a 135-amino-acid chain: Large ribosomal subunit protein mL61 (135 aa).

The segment covering 114-129 (HHESSPENIKEAHKQD) has biased composition (basic and acidic residues). Positions 114–135 (HHESSPENIKEAHKQDYSPPSN) are disordered.

The protein belongs to the mitochondrion-specific ribosomal protein mL61 family. As to quaternary structure, component of the mitochondrial large ribosomal subunit (mt-LSU). Mature yeast 74S mitochondrial ribosomes consist of a small (37S) and a large (54S) subunit. The 37S small subunit contains a 15S ribosomal RNA (15S mt-rRNA) and at least 32 different proteins. The 54S large subunit contains a 21S rRNA (21S mt-rRNA) and at least 45 different proteins.

The protein localises to the mitochondrion. Functionally, component of the mitochondrial ribosome (mitoribosome), a dedicated translation machinery responsible for the synthesis of mitochondrial genome-encoded proteins, including at least some of the essential transmembrane subunits of the mitochondrial respiratory chain. The mitoribosomes are attached to the mitochondrial inner membrane and translation products are cotranslationally integrated into the membrane. mL61 is not essential in cells grown at 30 degrees Celsius but is required for mitochondrial translation in cells grown at 18 degrees Celsius. This Schizosaccharomyces pombe (strain 972 / ATCC 24843) (Fission yeast) protein is Large ribosomal subunit protein mL61 (mrp49).